The following is a 144-amino-acid chain: Transcriptional regulator SlyA (144 aa).

The HTH marR-type domain maps to Glu-2–His-135. Positions Gln-49–Glu-72 form a DNA-binding region, H-T-H motif.

Belongs to the SlyA family. In terms of assembly, homodimer.

In terms of biological role, transcription regulator that can specifically activate or repress expression of target genes. This chain is Transcriptional regulator SlyA, found in Escherichia coli (strain 55989 / EAEC).